Consider the following 651-residue polypeptide: Protein transport protein SEC9 (651 aa).

3 disordered regions span residues 1-22 (MGLK…QNKD), 53-299 (AEDK…QAPM), and 313-332 (RNSE…DFEE). A phosphoserine mark is found at Ser-79 and Ser-92. Over residues 86–112 (NEATAGSNRGSSGTQDLGNGAESNSMQ) the composition is skewed to polar residues. The span at 120 to 129 (DDYRYDDDPY) shows a compositional bias: basic and acidic residues. Composition is skewed to polar residues over residues 157-218 (GTSL…SLDQ) and 244-284 (DSNT…ANPY). Phosphoserine occurs at positions 186, 190, 213, 271, and 273. Positions 285–296 (SSRSVRQPQSQQ) are enriched in low complexity. A compositionally biased stretch (basic and acidic residues) spans 313-327 (RNSEVDLNEEPRTGE). Ser-315 bears the Phosphoserine mark. Thr-355 bears the Phosphothreonine mark. Phosphoserine is present on Ser-359. T-SNARE coiled-coil homology domains lie at 434–496 (KFTK…VAEL) and 588–650 (DEME…LAGI).

This sequence belongs to the SNAP-25 family. In terms of assembly, interacts with SRO7 and SRO77.

Component of a SNARE complex that may be the effector of SEC4 function in exocytosis. The chain is Protein transport protein SEC9 (SEC9) from Saccharomyces cerevisiae (strain ATCC 204508 / S288c) (Baker's yeast).